The primary structure comprises 340 residues: Melanin-concentrating hormone receptor 2 (340 aa).

The Extracellular portion of the chain corresponds to 1-34 (MNPFHSSCWNTSAELSNKSWNKEFAYQTASAVDT). 2 N-linked (GlcNAc...) asparagine glycosylation sites follow: asparagine 10 and asparagine 17. A helical membrane pass occupies residues 35-57 (VILPSMIGIICSTGLVGNILIVF). At 58–69 (TIIRSRKKTVPD) the chain is on the cytoplasmic side. Residues 70–92 (IYICNLAVADLVHIIGMPFLIHQ) traverse the membrane as a helical segment. The Extracellular portion of the chain corresponds to 93 to 106 (WARGGEWVFGGPLC). A helical membrane pass occupies residues 107-129 (TIITSLDTCNQFACSAIMTVMSV). Topologically, residues 130-149 (DRYFALVQPFRLTSWRTRYK) are cytoplasmic. A helical transmembrane segment spans residues 150-172 (TIRINLGLWAASFILALPVWIYS). At 173 to 198 (KVIKFKDGVESCAFDLTSPDDVLWYT) the chain is on the extracellular side. A helical transmembrane segment spans residues 199 to 221 (LYLTITTFFFPLPLILVCYILIL). The Cytoplasmic segment spans residues 222–252 (CYTWEMYQQNKDARCCNPSVPKQRVMKLTKM). The chain crosses the membrane as a helical span at residues 253–272 (VLVLVAVFILSAAPYHVIQL). At 273–286 (VNLQMEQPTLAFYV) the chain is on the extracellular side. The chain crosses the membrane as a helical span at residues 287–309 (GYYLSICLSYASSSINPFLYILL). Residues 310 to 340 (SGNFQKRLPQIQRRVTDKEIKNMGNTLKSHF) are Cytoplasmic-facing.

The protein belongs to the G-protein coupled receptor 1 family.

It is found in the cell membrane. In terms of biological role, receptor for melanin-concentrating hormone, coupled to G proteins that activate phosphoinositide hydrolysis. This chain is Melanin-concentrating hormone receptor 2 (MCHR2), found in Macaca fascicularis (Crab-eating macaque).